Consider the following 380-residue polypeptide: Kappa-type opioid receptor (380 aa).

At 1–57 the chain is on the extracellular side; that stretch reads MEPPVQIFRGEPGPTCSPSTCLPPNGSGWFPGWAEPDGNGSAGSEDVLLEPAHISPV. Residues Asn25 and Asn39 are each glycosylated (N-linked (GlcNAc...) asparagine). The chain crosses the membrane as a helical span at residues 58-85; sequence ILVIITAVYSVVFVVGLVGNSLVMFVII. Over 86-95 the chain is Cytoplasmic; the sequence is RYTKMKTATN. The helical transmembrane segment at 96-119 threads the bilayer; the sequence is IYIFNLALADALVTTTMPFQSTVY. The Extracellular portion of the chain corresponds to 120–132; it reads LMNSWPFGDVLCK. Cys131 and Cys210 are disulfide-bonded. Residues 133 to 154 traverse the membrane as a helical segment; that stretch reads VVISIDYYNMFTSIFTLTMMSV. Over 155–173 the chain is Cytoplasmic; that stretch reads DRYIAVCHPVKALDFRTPL. Residues 174–196 form a helical membrane-spanning segment; the sequence is KAKIINICIWILSSSVGISAIVL. Residues 197 to 222 are Extracellular-facing; it reads GGTKVREDMEVIECSLQFPDDDYSWW. The helical transmembrane segment at 223–247 threads the bilayer; sequence DLFMKVCVFVFAFVIPVLIIIVCYT. Topologically, residues 248–274 are cytoplasmic; the sequence is LMILRLKSVRLLSGSREKDRNLRRITR. The chain crosses the membrane as a helical span at residues 275-296; the sequence is LVLVVVAVFVVCWTPIHIFILV. At 297-311 the chain is on the extracellular side; that stretch reads EALGSTAHSTAALSS. A helical transmembrane segment spans residues 312 to 333; it reads YYFCIALGYTNSSLNPILYAFL. Residues 334–380 are Cytoplasmic-facing; sequence DENFKRCFRDFCFPIKMRMERQSTSRVRNTVQDPAYVREVDGVNKPV. Cys345 is lipidated: S-palmitoyl cysteine.

The protein belongs to the G-protein coupled receptor 1 family. In terms of assembly, interacts with NHERF1. Interacts with GABARAPL1.

It localises to the cell membrane. In terms of biological role, G-protein coupled opioid receptor that functions as a receptor for endogenous alpha-neoendorphins and dynorphins, but has low affinity for beta-endorphins. Also functions as a receptor for various synthetic opioids and for the psychoactive diterpene salvinorin A. Ligand binding causes a conformation change that triggers signaling via guanine nucleotide-binding proteins (G proteins) and modulates the activity of down-stream effectors, such as adenylate cyclase. Signaling leads to the inhibition of adenylate cyclase activity. Inhibits neurotransmitter release by reducing calcium ion currents and increasing potassium ion conductance. Plays a role in the perception of pain. Plays a role in mediating reduced physical activity upon treatment with synthetic opioids. Plays a role in the regulation of salivation in response to synthetic opioids. May play a role in arousal and regulation of autonomic and neuroendocrine functions. In Bos taurus (Bovine), this protein is Kappa-type opioid receptor (OPRK1).